Reading from the N-terminus, the 191-residue chain is Cytochrome b-245 light chain (191 aa).

Topologically, residues 2–7 (GQIEWA) are cytoplasmic. A helical transmembrane segment spans residues 8–30 (MWANEQALASGLILITGGIVATA). Over 31-35 (GQFTQ) the chain is Extracellular. A helical transmembrane segment spans residues 36-53 (WYLGAYSIAAGVLVCLLE). Topologically, residues 54 to 69 (YPRGKRSKGSTMERCG) are cytoplasmic. An intramembrane segment occupies 70 to 80 (QKYLTRVVKLF). The Cytoplasmic segment spans residues 81–86 (GPLTRN). Residues 87–104 (YYIRAFLHLGLAVPAGFL) form a helical membrane-spanning segment. Residue Leu-105 is a topological domain, extracellular. Residues 106–126 (ATILGTACLAIASGIYLLAAI) traverse the membrane as a helical segment. Residues 127-191 (RGEQWSPIEP…NPMPVNDEVV (65 aa)) lie on the Cytoplasmic side of the membrane. The disordered stretch occupies residues 134–191 (IEPKPKERPQIGGTIKQPPSNPPPRPPAEARKKLSEEAAGVPTGGPQENPMPVNDEVV). Thr-147 is modified (phosphothreonine). Lys-149 is covalently cross-linked (Glycyl lysine isopeptide (Lys-Gly) (interchain with G-Cter in ubiquitin)). Residue Ser-168 is modified to Phosphoserine.

Belongs to the p22phox family. In terms of assembly, component of the phagocyte NADPH oxidase core complex/cytochrome b558 complex, composed of CYBB (heavy chain (beta)) and CYBA (light chain (alpha)). Component of the phagocyte NADPH oxidase complex composed of an obligatory core heterodimer formed by the membrane proteins CYBA and CYBB and the cytosolic regulatory subunits NCF1/p47-phox, NCF2/p67-phox, NCF4/p40-phox and the small GTPase RAC1 or RAC2. Interacts with NCF1 (via SH3 domain). Interacts with SH3PXD2A. Interacts with DUOX1, DUOX2 and TPO. Interacts with NOX4; this interaction mediates superoxide generation. Interacts with calprotectin (S100A8/9). Interacts with GBP7. Interacts with NOXO1. Forms a heterodimer with NOX3 and is essential for activity and cell membrane localization of NOX3. Interacts with NOX1. Phosphorylation at Thr-147 enhances NADPH oxidase activity by promoting NCF1/p47-phox binding. Post-translationally, ubiquitinated at Lys-149 likely by RNF145.

Its subcellular location is the cell membrane. Functionally, subunit of NADPH oxidase complexes that is required for the NADPH oxidase activity that generates, in various cell types, superoxide from molecular oxygen utilizing NADPH as an electron donor. Subunit of the phagocyte NADPH oxidase complex that mediates the transfer of electrons from cytosolic NADPH to O2 to produce the superoxide anion (O2(-)). In the activated complex, electrons are first transferred from NADPH to flavin adenine dinucleotide (FAD) and subsequently transferred via two heme molecules to molecular oxygen, producing superoxide through an outer-sphere reaction. Activation of the NADPH oxidase complex is initiated by the assembly of cytosolic subunits of the NADPH oxidase complex with the core NADPH oxidase complex to form a complex at the plasma membrane or phagosomal membrane. This activation process is initiated by phosphorylation dependent binding of the cytosolic NCF1/p47-phox subunit to the C-terminus of CYBA/p22-phox. Aassociates with NOX3 to form a functional NADPH oxidase constitutively generating superoxide. This chain is Cytochrome b-245 light chain, found in Bison bison (American bison).